Reading from the N-terminus, the 359-residue chain is UPF0283 membrane protein RHE_CH02332 (359 aa).

The disordered stretch occupies residues 1 to 61; sequence MSKPPSDLPR…EDPFINPDRD (61 aa). Helical transmembrane passes span 77–97 and 111–131; these read FGKIALAAFGILLSLGIGLWT and LGYAALGVLAIGILAVLALVI.

This sequence belongs to the UPF0283 family.

Its subcellular location is the cell inner membrane. This chain is UPF0283 membrane protein RHE_CH02332, found in Rhizobium etli (strain ATCC 51251 / DSM 11541 / JCM 21823 / NBRC 15573 / CFN 42).